Consider the following 250-residue polypeptide: LexA repressor (250 aa).

Basic and acidic residues predominate over residues 1–21 (MTSQERGTRRGDTRGNVRDFP). Positions 1 to 33 (MTSQERGTRRGDTRGNVRDFPDSPADASGLTQR) are disordered. The segment at residues 54-74 (VREIGEAVGLTSTSSVAHQLK) is a DNA-binding region (H-T-H motif). Active-site for autocatalytic cleavage activity residues include serine 174 and lysine 211.

Belongs to the peptidase S24 family. Homodimer.

The enzyme catalyses Hydrolysis of Ala-|-Gly bond in repressor LexA.. In terms of biological role, represses a number of genes involved in the response to DNA damage (SOS response), including recA and lexA. In the presence of single-stranded DNA, RecA interacts with LexA causing an autocatalytic cleavage which disrupts the DNA-binding part of LexA, leading to derepression of the SOS regulon and eventually DNA repair. This is LexA repressor from Parafrankia sp. (strain EAN1pec).